The chain runs to 260 residues: Imidazole glycerol phosphate synthase subunit HisF (260 aa).

Active-site residues include Asp-11 and Asp-130.

The protein belongs to the HisA/HisF family. In terms of assembly, heterodimer of HisH and HisF.

It is found in the cytoplasm. The enzyme catalyses 5-[(5-phospho-1-deoxy-D-ribulos-1-ylimino)methylamino]-1-(5-phospho-beta-D-ribosyl)imidazole-4-carboxamide + L-glutamine = D-erythro-1-(imidazol-4-yl)glycerol 3-phosphate + 5-amino-1-(5-phospho-beta-D-ribosyl)imidazole-4-carboxamide + L-glutamate + H(+). It functions in the pathway amino-acid biosynthesis; L-histidine biosynthesis; L-histidine from 5-phospho-alpha-D-ribose 1-diphosphate: step 5/9. In terms of biological role, IGPS catalyzes the conversion of PRFAR and glutamine to IGP, AICAR and glutamate. The HisF subunit catalyzes the cyclization activity that produces IGP and AICAR from PRFAR using the ammonia provided by the HisH subunit. In Psychrobacter cryohalolentis (strain ATCC BAA-1226 / DSM 17306 / VKM B-2378 / K5), this protein is Imidazole glycerol phosphate synthase subunit HisF.